Here is a 177-residue protein sequence, read N- to C-terminus: Matrix protein (177 aa).

Homomultimer. Interacts with nucleoprotein and with the cytoplasmic domain of glycoprotein.

The protein localises to the virion membrane. Its subcellular location is the host endomembrane system. Its function is as follows. Plays a major role in assembly and budding of virion. Completely covers the ribonucleoprotein coil and keep it in condensed bullet-shaped form. Inhibits viral transcription and stimulates replication. This is Matrix protein (M) from Lettuce necrotic yellows virus (isolate 318) (LNYV).